Consider the following 275-residue polypeptide: 4-hydroxy-tetrahydrodipicolinate reductase (275 aa).

NAD(+)-binding positions include 13–18 and 108–110; these read GAAGKM and GTT. The active-site Proton donor/acceptor is the His164. (S)-2,3,4,5-tetrahydrodipicolinate is bound at residue His165. Residue Lys168 is the Proton donor of the active site. 174-175 provides a ligand contact to (S)-2,3,4,5-tetrahydrodipicolinate; sequence GT.

Belongs to the DapB family.

The protein resides in the cytoplasm. The enzyme catalyses (S)-2,3,4,5-tetrahydrodipicolinate + NAD(+) + H2O = (2S,4S)-4-hydroxy-2,3,4,5-tetrahydrodipicolinate + NADH + H(+). It catalyses the reaction (S)-2,3,4,5-tetrahydrodipicolinate + NADP(+) + H2O = (2S,4S)-4-hydroxy-2,3,4,5-tetrahydrodipicolinate + NADPH + H(+). The protein operates within amino-acid biosynthesis; L-lysine biosynthesis via DAP pathway; (S)-tetrahydrodipicolinate from L-aspartate: step 4/4. Catalyzes the conversion of 4-hydroxy-tetrahydrodipicolinate (HTPA) to tetrahydrodipicolinate. The sequence is that of 4-hydroxy-tetrahydrodipicolinate reductase from Acaryochloris marina (strain MBIC 11017).